A 289-amino-acid chain; its full sequence is 4-diphosphocytidyl-2-C-methyl-D-erythritol kinase (289 aa).

Lys-16 is a catalytic residue. 99-109 serves as a coordination point for ATP; sequence PMGGGLGGGSS. Asp-141 is an active-site residue.

Belongs to the GHMP kinase family. IspE subfamily.

It carries out the reaction 4-CDP-2-C-methyl-D-erythritol + ATP = 4-CDP-2-C-methyl-D-erythritol 2-phosphate + ADP + H(+). Its pathway is isoprenoid biosynthesis; isopentenyl diphosphate biosynthesis via DXP pathway; isopentenyl diphosphate from 1-deoxy-D-xylulose 5-phosphate: step 3/6. Its function is as follows. Catalyzes the phosphorylation of the position 2 hydroxy group of 4-diphosphocytidyl-2C-methyl-D-erythritol. This chain is 4-diphosphocytidyl-2-C-methyl-D-erythritol kinase, found in Ralstonia pickettii (strain 12J).